The following is a 204-amino-acid chain: Small ribosomal subunit protein uS4 (204 aa).

The region spanning 93-156 (SRLSSVLYHS…AKIPILIEAE (64 aa)) is the S4 RNA-binding domain.

Belongs to the universal ribosomal protein uS4 family. As to quaternary structure, part of the 30S ribosomal subunit. Contacts protein S5. The interaction surface between S4 and S5 is involved in control of translational fidelity.

In terms of biological role, one of the primary rRNA binding proteins, it binds directly to 16S rRNA where it nucleates assembly of the body of the 30S subunit. Its function is as follows. With S5 and S12 plays an important role in translational accuracy. The sequence is that of Small ribosomal subunit protein uS4 from Wolbachia pipientis subsp. Culex pipiens (strain wPip).